A 349-amino-acid chain; its full sequence is Ribonucleoside-diphosphate reductase small chain (349 aa).

Residues Asp-99, Glu-130, and His-133 each contribute to the Fe cation site. The active site involves Tyr-137. Fe cation is bound by residues Glu-192, Glu-226, and His-229.

This sequence belongs to the ribonucleoside diphosphate reductase small chain family. Heterodimer of a large and a small subunit. Requires Fe cation as cofactor.

It carries out the reaction a 2'-deoxyribonucleoside 5'-diphosphate + [thioredoxin]-disulfide + H2O = a ribonucleoside 5'-diphosphate + [thioredoxin]-dithiol. In terms of biological role, provides the precursors necessary for DNA synthesis. Catalyzes the biosynthesis of deoxyribonucleotides from the corresponding ribonucleotides. This Plasmodium falciparum (isolate Dd2) protein is Ribonucleoside-diphosphate reductase small chain (RNR2).